We begin with the raw amino-acid sequence, 433 residues long: Glutamate-1-semialdehyde 2,1-aminomutase (433 aa).

An N6-(pyridoxal phosphate)lysine modification is found at Lys272.

It belongs to the class-III pyridoxal-phosphate-dependent aminotransferase family. HemL subfamily. As to quaternary structure, homodimer. Pyridoxal 5'-phosphate serves as cofactor.

Its subcellular location is the cytoplasm. It carries out the reaction (S)-4-amino-5-oxopentanoate = 5-aminolevulinate. It functions in the pathway porphyrin-containing compound metabolism; protoporphyrin-IX biosynthesis; 5-aminolevulinate from L-glutamyl-tRNA(Glu): step 2/2. It participates in porphyrin-containing compound metabolism; chlorophyll biosynthesis. The chain is Glutamate-1-semialdehyde 2,1-aminomutase from Synechococcus sp. (strain WH7803).